We begin with the raw amino-acid sequence, 600 residues long: Na(+)/dicarboxylate cotransporter 3 (600 aa).

At 1–16 the chain is on the cytoplasmic side; the sequence is MAALAALAKKVWSARR. The chain crosses the membrane as a helical span at residues 17–37; the sequence is LLVLLLVPLALLPILFALPPK. The Extracellular portion of the chain corresponds to 38-55; the sequence is EGRCLYVILLMAVYWCTE. Residues 56–76 traverse the membrane as a helical segment; sequence ALPLSVTALLPIILFPFMGIL. Residues 77-82 are Cytoplasmic-facing; the sequence is PSSKVC. A helical membrane pass occupies residues 83-103; the sequence is PQYFLDTNFLFLSGLIMASAI. The Extracellular portion of the chain corresponds to 104–137; the sequence is EERNLHRRIALKVLMLVGVQPARLILGMMVTTSF. Residues 138–158 traverse the membrane as a helical segment; that stretch reads LSMWLSNTASTAMMLPIASAI. Topologically, residues 159–229 are cytoplasmic; that stretch reads LKSLFGQRDT…KEEEHRRNIW (71 aa). The chain crosses the membrane as a helical span at residues 230 to 250; sequence KGFLISIPYSASIGGTATLTG. Over 251–278 the chain is Extracellular; it reads TAPNLILLGQLKSFFPQCDVVNFGSWFI. The helical transmembrane segment at 279–299 threads the bilayer; that stretch reads FAFPLMLLFLLVGWLWISFLY. Residues 300–336 lie on the Cytoplasmic side of the membrane; sequence GGMSWRGWRKKNSKLQDVAEDKAKAVIQEEFQNLGPI. Residues 337-357 traverse the membrane as a helical segment; it reads KFAEQAVFILFCLFAILLFSR. Topologically, residues 358–372 are extracellular; the sequence is DPKFIPGWASLFAPG. The helical transmembrane segment at 373 to 393 threads the bilayer; it reads FVSDAVTGVAIVTILFFFPSQ. Residues 394 to 422 lie on the Cytoplasmic side of the membrane; sequence KPSLKWWFDFKAPNSETEPLLSWKKAQET. Residues 423–443 constitute an intramembrane region (helical); the sequence is VPWNIILLLGGGFAMAKGCEE. The Cytoplasmic portion of the chain corresponds to 444–461; it reads SGLSAWIGGQLHPLEHVP. A helical transmembrane segment spans residues 462–482; that stretch reads PLLAVLLITVVIAFFTEFASN. Residues 483–505 lie on the Extracellular side of the membrane; the sequence is TATIIIFLPVLAELAIRLHVHPL. A helical membrane pass occupies residues 506 to 526; the sequence is YLMIPGTVSCSYAFMLPVSTP. The Cytoplasmic portion of the chain corresponds to 527–546; it reads PNSIAFSTGHLLVKDMVRTG. Residues 547-567 traverse the membrane as a helical segment; sequence LLMNLMGVLLLSLAMNTWAQA. The Extracellular portion of the chain corresponds to 568-600; the sequence is IFQLGTFPDWANTHAANVTALPPALTNNTVQTL. Asparagine 584 and asparagine 594 each carry an N-linked (GlcNAc...) asparagine glycan.

It belongs to the SLC13A/DASS transporter (TC 2.A.47) family. NADC subfamily. In terms of tissue distribution, highly expressed in proximal parts of straight tubules in the kidney. Detected in placenta, in brain, and in liver. Strongly expressed within the meningeal layers of supporting tissue that surround the brain and relatively weakly expressed throughout the cerebral cortex, hippocampus, and cerebellum.

It localises to the cell membrane. It carries out the reaction succinate(out) + 3 Na(+)(out) = succinate(in) + 3 Na(+)(in). The catalysed reaction is 2-oxoglutarate(out) + 3 Na(+)(out) = 2-oxoglutarate(in) + 3 Na(+)(in). It catalyses the reaction N-acetyl-L-aspartate(out) + 3 Na(+)(out) = N-acetyl-L-aspartate(in) + 3 Na(+)(in). The enzyme catalyses glutarate(out) + 3 Na(+)(out) = glutarate(in) + 3 Na(+)(in). It carries out the reaction fumarate(out) + 3 Na(+)(out) = fumarate(in) + 3 Na(+)(in). The catalysed reaction is malate(out) + 3 Na(+)(out) = malate(in) + 3 Na(+)(in). It catalyses the reaction 2,2-dimethylsuccinate(out) + 3 Na(+)(out) = 2,2-dimethylsuccinate(in) + 3 Na(+)(in). The enzyme catalyses 2,3-dimethylsuccinate(out) + 3 Na(+)(out) = 2,3-dimethylsuccinate(in) + 3 Na(+)(in). It carries out the reaction itaconate(out) + 3 Na(+)(out) = itaconate(in) + 3 Na(+)(in). With respect to regulation, li(+) decreases succinate transport in the presence of Na(+). In terms of biological role, high-affinity sodium-dicarboxylate cotransporter that accepts a range of substrates with 4-6 carbon atoms, such as the citric acid cycle intermediates succinate and alpha-ketoglutarate (2-oxoglutarate), as well as other compounds including N-acetyl-L-aspartate. Transports the dicarboxylate into the cell with a probable stoichiometry of 3 Na(+) for 1 divalent dicarboxylate, rendering the process electrogenic. Can transport citrate in a Na(+)-dependent manner, recognizing the divalent form of citrate rather than the trivalent form which is normally found in blood. Imports itaconate in hepatocytes leading to activation of TFEB-dependent lysosomal biogenesis involved in antibacterial innate immune response. The protein is Na(+)/dicarboxylate cotransporter 3 (Slc13a3) of Rattus norvegicus (Rat).